Reading from the N-terminus, the 296-residue chain is Ribosomal protein L11 methyltransferase (296 aa).

4 residues coordinate S-adenosyl-L-methionine: Thr147, Gly168, Asp190, and Asn232.

It belongs to the methyltransferase superfamily. PrmA family.

The protein localises to the cytoplasm. The catalysed reaction is L-lysyl-[protein] + 3 S-adenosyl-L-methionine = N(6),N(6),N(6)-trimethyl-L-lysyl-[protein] + 3 S-adenosyl-L-homocysteine + 3 H(+). Methylates ribosomal protein L11. In Marinomonas sp. (strain MWYL1), this protein is Ribosomal protein L11 methyltransferase.